The sequence spans 569 residues: Arginine--tRNA ligase (569 aa).

The 'HIGH' region motif lies at 123–133 (ANPNGPLHVGH).

This sequence belongs to the class-I aminoacyl-tRNA synthetase family.

Its subcellular location is the cytoplasm. The catalysed reaction is tRNA(Arg) + L-arginine + ATP = L-arginyl-tRNA(Arg) + AMP + diphosphate. The polypeptide is Arginine--tRNA ligase (Methanosarcina mazei (strain ATCC BAA-159 / DSM 3647 / Goe1 / Go1 / JCM 11833 / OCM 88) (Methanosarcina frisia)).